We begin with the raw amino-acid sequence, 414 residues long: Gamma-glutamyl phosphate reductase (414 aa).

The protein belongs to the gamma-glutamyl phosphate reductase family.

The protein localises to the cytoplasm. It carries out the reaction L-glutamate 5-semialdehyde + phosphate + NADP(+) = L-glutamyl 5-phosphate + NADPH + H(+). It functions in the pathway amino-acid biosynthesis; L-proline biosynthesis; L-glutamate 5-semialdehyde from L-glutamate: step 2/2. Functionally, catalyzes the NADPH-dependent reduction of L-glutamate 5-phosphate into L-glutamate 5-semialdehyde and phosphate. The product spontaneously undergoes cyclization to form 1-pyrroline-5-carboxylate. This Caldanaerobacter subterraneus subsp. tengcongensis (strain DSM 15242 / JCM 11007 / NBRC 100824 / MB4) (Thermoanaerobacter tengcongensis) protein is Gamma-glutamyl phosphate reductase.